The chain runs to 583 residues: Sensor protein SrrB (583 aa).

The Cytoplasmic segment spans residues 1–11 (MMSRLNSVVIK). A helical membrane pass occupies residues 12-32 (LWLTIILIVTTVLILLSIALI). Residues 33-174 (TFMQYYFTQE…SIEDTNNAIT (142 aa)) are Extracellular-facing. The helical transmembrane segment at 175–195 (IITIITAVIFLTITTVFAFFL) threads the bilayer. Residues 196–583 (SSRITKPLRR…TFIIKLPKPE (388 aa)) lie on the Cytoplasmic side of the membrane. An HAMP domain is found at 197-249 (SRITKPLRRLRDQATRVSEGDYSYKPSVTTKDEIGQLSQAFNQMSTEIEEHVD). The 218-residue stretch at 366-583 (NVSHELRTPI…TFIIKLPKPE (218 aa)) folds into the Histidine kinase domain. At His369 the chain carries Phosphohistidine; by autocatalysis.

The protein localises to the cell membrane. It catalyses the reaction ATP + protein L-histidine = ADP + protein N-phospho-L-histidine.. Member of the two-component regulatory system SrrA/SrrB, which is involved in the global regulation of staphylococcal virulence factors in response to environmental oxygen levels as well as biofilm formation. Also plays an essential role in host-derived nitric oxide resistance by regulating hmp/flavohemoglobin, an enzyme that detoxifies nitric oxide by converting it to nitrate. Functions as a sensor protein kinase which is autophosphorylated at a histidine residue and transfers its phosphate group to SrrA. In turn, SrrA binds to the upstream promoter regions of the target genes to positively and negatively regulate their expression. The protein is Sensor protein SrrB (srrB) of Staphylococcus aureus (strain MW2).